A 105-amino-acid polypeptide reads, in one-letter code: Serine protease inhibitor Kazal-type 6 (105 aa).

Residues 1–23 form the signal peptide; sequence MKVAGVFLLLSLALLCFFSGAFS. The residue at position 24 (glutamine 24) is a Pyrrolidone carboxylic acid. Positions 49–105 constitute a Kazal-like domain; it reads RLFQINCGEFRDPKVFCTRESDPLCGSDGQTYGNKCAFCKALEKSSGKINLKHRGKC. Disulfide bonds link cysteine 55-cysteine 87, cysteine 65-cysteine 84, and cysteine 73-cysteine 105.

As to expression, expressed in the upper epidermis and in skin appendages.

Its subcellular location is the secreted. Its function is as follows. Serine protease inhibitor selective for kallikreins. Efficiently inhibits KLK5 and human KLK2, KLK4, KLK5, KLK6, KLK7, KLK12, KLK13 and KLK14. Doesn't inhibit human KLK1 and KLK8. The polypeptide is Serine protease inhibitor Kazal-type 6 (Spink6) (Mus musculus (Mouse)).